We begin with the raw amino-acid sequence, 252 residues long: Demethylmenaquinone methyltransferase (252 aa).

Residues Thr64, Asp85, and 112–113 contribute to the S-adenosyl-L-methionine site; that span reads NA.

It belongs to the class I-like SAM-binding methyltransferase superfamily. MenG/UbiE family.

The enzyme catalyses a 2-demethylmenaquinol + S-adenosyl-L-methionine = a menaquinol + S-adenosyl-L-homocysteine + H(+). The protein operates within quinol/quinone metabolism; menaquinone biosynthesis; menaquinol from 1,4-dihydroxy-2-naphthoate: step 2/2. Methyltransferase required for the conversion of demethylmenaquinol (DMKH2) to menaquinol (MKH2). The sequence is that of Demethylmenaquinone methyltransferase from Lactococcus lactis subsp. lactis (strain IL1403) (Streptococcus lactis).